The primary structure comprises 207 residues: Zinc finger protein 487 (207 aa).

The 43-residue stretch at 1–43 (MLENYSLLLSVGYCITKPEVVCKLEHGQVLWILEEESPSQSHL) folds into the KRAB domain. The C2H2-type; atypical zinc-finger motif lies at 177–202 (KQCFEYNQCGKAFHEEAACSTHKRVC).

It belongs to the krueppel C2H2-type zinc-finger protein family.

The protein localises to the nucleus. Functionally, may be involved in transcriptional regulation. This is Zinc finger protein 487 (ZNF487) from Homo sapiens (Human).